Consider the following 484-residue polypeptide: Monocarboxylate transporter 2 (484 aa).

Residues 1–16 (MPSEPSAPLPQPLPPD) are Cytoplasmic-facing. A helical transmembrane segment spans residues 17–37 (GGWGWVVVCASFISIGFSYAF). The Extracellular portion of the chain corresponds to 38 to 60 (PKAVTVFFKDIQEIFNTTSSQIA). The helical transmembrane segment at 61-81 (WISSIMLAVMYAGGPISSVLV) threads the bilayer. Residues 82–90 (NNYGSRPVV) lie on the Cytoplasmic side of the membrane. Residues 91-111 (IVGGLLCCIGMILASYSNSVI) form a helical membrane-spanning segment. The Extracellular segment spans residues 112-116 (ELYLT). The chain crosses the membrane as a helical span at residues 117 to 137 (VGFIGGLGLAFNLQPALTIIG). Residues 138–149 (KYFYRRRPLANG) lie on the Cytoplasmic side of the membrane. The chain crosses the membrane as a helical span at residues 150-170 (CAMAGSPVFLSTLAPFNQYLF). The Extracellular segment spans residues 171 to 174 (NNYG). Residues 175–195 (WKGSFLILGGIFLHSCVAGCL) traverse the membrane as a helical segment. Residues 196-245 (MRPVGPSPNTKKSKSKVGSRHDSTLKKASKVSTAQKVNRFLDFSLFMHRG) lie on the Cytoplasmic side of the membrane. The chain crosses the membrane as a helical span at residues 246-266 (FLIYLSGNVILFLGIFAPIIF). Over 267–281 (LAQYAKHIGVDDYNS) the chain is Extracellular. A helical membrane pass occupies residues 282–302 (AFLLSVMAFIDMFARPSVGLI). Residues 303–311 (ANTSLIRPR) lie on the Cytoplasmic side of the membrane. The chain crosses the membrane as a helical span at residues 312 to 332 (IQYLFSSAIIFTGICHLLCPL). Residues 333–337 (ATTYS) lie on the Extracellular side of the membrane. Residues 338–358 (ALVVYVVFFGLGFGSISSLLF) form a helical membrane-spanning segment. At 359 to 372 (ECLMDIVGATRFSS) the chain is on the cytoplasmic side. A helical transmembrane segment spans residues 373–393 (AVGLTTIVECCPVLFGPPLAG). The Extracellular segment spans residues 394-405 (KLLDITGEYKYL). The helical transmembrane segment at 406-426 (YIASGTVVLVSGTYLLIGNAI) threads the bilayer. Topologically, residues 427–484 (NYRLLDKERKREKAKKKKSASHASREMEALNRSKQDEVTVKASNAHNPPSDRDKESNI) are cytoplasmic. Residues 438–484 (EKAKKKKSASHASREMEALNRSKQDEVTVKASNAHNPPSDRDKESNI) form a disordered region. Basic and acidic residues-rich tracts occupy residues 449–465 (ASRE…DEVT) and 475–484 (PSDRDKESNI).

It belongs to the major facilitator superfamily. Monocarboxylate porter (TC 2.A.1.13) family. As to quaternary structure, homodimer. Interacts with GRID2IP. Interacts with EMB; interaction mediates SLC16A7 targeting to the plasma membrane. Interacts with isoform 2 of BSG. As to expression, detected in testis and in spermatozoa (at protein level).

It is found in the cell membrane. It localises to the cytoplasm. The protein resides in the basolateral cell membrane. It catalyses the reaction (S)-lactate(in) + H(+)(in) = (S)-lactate(out) + H(+)(out). The catalysed reaction is 3-methyl-2-oxobutanoate(out) + H(+)(out) = 3-methyl-2-oxobutanoate(in) + H(+)(in). It carries out the reaction acetoacetate(out) + H(+)(out) = acetoacetate(in) + H(+)(in). The enzyme catalyses (R)-3-hydroxybutanoate(out) + H(+)(out) = (R)-3-hydroxybutanoate(in) + H(+)(in). It catalyses the reaction 4-methyl-2-oxopentanoate(out) + H(+)(out) = 4-methyl-2-oxopentanoate(in) + H(+)(in). The catalysed reaction is pyruvate(out) + H(+)(out) = pyruvate(in) + H(+)(in). It carries out the reaction (S)-3-hydroxybutanoate(out) + H(+)(out) = (S)-3-hydroxybutanoate(in) + H(+)(in). With respect to regulation, transport activity exhibits steep dependence on substrate concentration. Substrate concentration sensitivity of SLC16A7 arises from the strong inter-subunit cooperativity of the SLC16A7 dimer during transport. Inhibited by AR-C155858. In terms of biological role, proton-coupled monocarboxylate symporter. Catalyzes the rapid transport across the plasma membrane of monocarboxylates such as L-lactate, pyruvate and ketone bodies, acetoacetate, beta-hydroxybutyrate and acetate. Dimerization is functionally required and both subunits work cooperatively in transporting substrate. This Mus musculus (Mouse) protein is Monocarboxylate transporter 2 (Slc16a7).